Consider the following 283-residue polypeptide: Glutamate racemase (283 aa).

Residues 28 to 29 (DS) and 60 to 61 (YG) contribute to the substrate site. Residue Cys92 is the Proton donor/acceptor of the active site. 93–94 (NS) contributes to the substrate binding site. Catalysis depends on Cys204, which acts as the Proton donor/acceptor. 205–206 (TH) is a binding site for substrate.

Belongs to the aspartate/glutamate racemases family.

It carries out the reaction L-glutamate = D-glutamate. It participates in cell wall biogenesis; peptidoglycan biosynthesis. In terms of biological role, provides the (R)-glutamate required for cell wall biosynthesis. The polypeptide is Glutamate racemase (Erwinia tasmaniensis (strain DSM 17950 / CFBP 7177 / CIP 109463 / NCPPB 4357 / Et1/99)).